The primary structure comprises 47 residues: uncharacterized protein (47 aa).

The tract at residues 24–47 (FGPNPIEPPTDIAPDPDSTKTWLI) is disordered.

This is an uncharacterized protein from Mycobacterium tuberculosis (strain ATCC 25618 / H37Rv).